A 296-amino-acid polypeptide reads, in one-letter code: Large ribosomal subunit protein uL18B (296 aa).

Residues 251 to 296 (PVHEKKPKKEVKKKRWNRAKLSLEQKKDRVAQKKASFLRAQEKADS) form a disordered region. Residues 255-268 (KKPKKEVKKKRWNR) are compositionally biased toward basic residues. A compositionally biased stretch (basic and acidic residues) spans 271–281 (LSLEQKKDRVA).

This sequence belongs to the universal ribosomal protein uL18 family. Component of the large ribosomal subunit (LSU). Part of a LSU subcomplex, the 5S RNP which is composed of the 5S RNA, RPL5 and RPL11.

It localises to the cytoplasm. Its subcellular location is the nucleus. It is found in the nucleolus. Component of the ribosome, a large ribonucleoprotein complex responsible for the synthesis of proteins in the cell. The small ribosomal subunit (SSU) binds messenger RNAs (mRNAs) and translates the encoded message by selecting cognate aminoacyl-transfer RNA (tRNA) molecules. The large subunit (LSU) contains the ribosomal catalytic site termed the peptidyl transferase center (PTC), which catalyzes the formation of peptide bonds, thereby polymerizing the amino acids delivered by tRNAs into a polypeptide chain. The nascent polypeptides leave the ribosome through a tunnel in the LSU and interact with protein factors that function in enzymatic processing, targeting, and the membrane insertion of nascent chains at the exit of the ribosomal tunnel. As part of the 5S RNP/5S ribonucleoprotein particle it is an essential component of the LSU, required for its formation and the maturation of rRNAs. It also couples ribosome biogenesis to p53/TP53 activation. As part of the 5S RNP it accumulates in the nucleoplasm and inhibits MDM2, when ribosome biogenesis is perturbed, mediating the stabilization and the activation of TP53. The sequence is that of Large ribosomal subunit protein uL18B (rpl5-b) from Xenopus laevis (African clawed frog).